The primary structure comprises 792 residues: Phenylalanine--tRNA ligase beta subunit (792 aa).

The 109-residue stretch at 39 to 147 folds into the tRNA-binding domain; the sequence is GEALDLIVVA…DDAPIGTPLA (109 aa). A B5 domain is found at 400-475; sequence PAPASILLRR…RIRGYEHLPT (76 aa). Residues Asp453, Asp459, Glu462, and Glu463 each contribute to the Mg(2+) site. The region spanning 698–791 is the FDX-ACB domain; that stretch reads SRFPFVRRDL…IQQRHDVRIR (94 aa).

This sequence belongs to the phenylalanyl-tRNA synthetase beta subunit family. Type 1 subfamily. Tetramer of two alpha and two beta subunits. Mg(2+) serves as cofactor.

Its subcellular location is the cytoplasm. It carries out the reaction tRNA(Phe) + L-phenylalanine + ATP = L-phenylalanyl-tRNA(Phe) + AMP + diphosphate + H(+). The protein is Phenylalanine--tRNA ligase beta subunit (pheT) of Xylella fastidiosa (strain 9a5c).